Reading from the N-terminus, the 342-residue chain is Nicotinate-nucleotide--dimethylbenzimidazole phosphoribosyltransferase (342 aa).

E311 acts as the Proton acceptor in catalysis.

Belongs to the CobT family.

It carries out the reaction 5,6-dimethylbenzimidazole + nicotinate beta-D-ribonucleotide = alpha-ribazole 5'-phosphate + nicotinate + H(+). It functions in the pathway nucleoside biosynthesis; alpha-ribazole biosynthesis; alpha-ribazole from 5,6-dimethylbenzimidazole: step 1/2. In terms of biological role, catalyzes the synthesis of alpha-ribazole-5'-phosphate from nicotinate mononucleotide (NAMN) and 5,6-dimethylbenzimidazole (DMB). The polypeptide is Nicotinate-nucleotide--dimethylbenzimidazole phosphoribosyltransferase (Vibrio atlanticus (strain LGP32) (Vibrio splendidus (strain Mel32))).